Consider the following 225-residue polypeptide: Protein ERP3 (225 aa).

The first 23 residues, 1-23 (MSNLCVLFFQFFFLAQFFAEASP), serve as a signal peptide directing secretion. The Lumenal segment spans residues 24–195 (LTFELNKGRK…STEHRIVMFS (172 aa)). The GOLD domain maps to 33-172 (KECLYTLTPE…LHVLERNIQY (140 aa)). The segment covering 129-138 (ERRKARKAQR) has biased composition (basic residues). The disordered stretch occupies residues 129–149 (ERRKARKAQRNLRDSKTDPLQ). Residues 196-216 (IYGILLIIGMSCAQIAILEFI) traverse the membrane as a helical segment. Over 217–225 (FRESRKHNV) the chain is Cytoplasmic.

This sequence belongs to the EMP24/GP25L family.

It localises to the endoplasmic reticulum membrane. Involved in vesicular protein trafficking. This Saccharomyces cerevisiae (strain ATCC 204508 / S288c) (Baker's yeast) protein is Protein ERP3 (ERP3).